The following is a 385-amino-acid chain: Putative F-box protein At1g49610 (385 aa).

An F-box domain is found at 25–73 (VDSISSLPDVILQENLSLIPTKFAIRTSVLSKRWRHVWSETPSLDFDDC).

This Arabidopsis thaliana (Mouse-ear cress) protein is Putative F-box protein At1g49610.